A 165-amino-acid chain; its full sequence is Large ribosomal subunit protein uL11 (165 aa).

The residue at position 38 (S38) is a Phosphoserine. Residue K40 forms a Glycyl lysine isopeptide (Lys-Gly) (interchain with G-Cter in SUMO2) linkage. A Glycyl lysine isopeptide (Lys-Gly) (interchain with G-Cter in ubiquitin) cross-link involves residue K48. N6-acetyllysine is present on K54. K83 participates in a covalent cross-link: Glycyl lysine isopeptide (Lys-Gly) (interchain with G-Cter in ubiquitin). S165 carries the post-translational modification Phosphoserine.

The protein belongs to the universal ribosomal protein uL11 family. As to quaternary structure, component of the large ribosomal subunit. Mature ribosomes consist of a small (40S) and a large (60S) subunit. The 40S subunit contains about 33 different proteins and 1 molecule of RNA (18S). The 60S subunit contains about 49 different proteins and 3 molecules of RNA (28S, 5.8S and 5S). In terms of processing, ubiquitinated at Lys-48 and Lys-83 by RNF14 and RNF25 in response to ribosome collisions (ribosome stalling).

It is found in the cytoplasm. Functionally, component of the large ribosomal subunit. The ribosome is a large ribonucleoprotein complex responsible for the synthesis of proteins in the cell. Binds directly to 26S ribosomal RNA. The polypeptide is Large ribosomal subunit protein uL11 (Rpl12) (Rattus norvegicus (Rat)).